A 49-amino-acid chain; its full sequence is uncharacterized protein (49 aa).

A helical transmembrane segment spans residues P31–F48.

Its subcellular location is the membrane. This is an uncharacterized protein from Saccharomyces cerevisiae (strain ATCC 204508 / S288c) (Baker's yeast).